The following is a 350-amino-acid chain: Uroporphyrinogen decarboxylase (350 aa).

Substrate contacts are provided by residues 27-31, F46, D76, Y152, S207, and H321; that span reads RQAGR.

This sequence belongs to the uroporphyrinogen decarboxylase family. In terms of assembly, homodimer.

The protein resides in the cytoplasm. The enzyme catalyses uroporphyrinogen III + 4 H(+) = coproporphyrinogen III + 4 CO2. It participates in porphyrin-containing compound metabolism; protoporphyrin-IX biosynthesis; coproporphyrinogen-III from 5-aminolevulinate: step 4/4. Functionally, catalyzes the decarboxylation of four acetate groups of uroporphyrinogen-III to yield coproporphyrinogen-III. In Listeria monocytogenes serotype 4a (strain HCC23), this protein is Uroporphyrinogen decarboxylase.